The following is a 524-amino-acid chain: GMP synthase [glutamine-hydrolyzing] (524 aa).

Residues 9 to 207 form the Glutamine amidotransferase type-1 domain; sequence RILILDFGSQ…VIHICQCIPN (199 aa). The Nucleophile role is filled by Cys-86. Residues His-181 and Glu-183 contribute to the active site. One can recognise a GMPS ATP-PPase domain in the interval 208-399; the sequence is WTTKHIIEDS…LGLPADLIYR (192 aa). ATP is bound at residue 235 to 241; sequence SGGVDSA.

In terms of assembly, homodimer.

The catalysed reaction is XMP + L-glutamine + ATP + H2O = GMP + L-glutamate + AMP + diphosphate + 2 H(+). It participates in purine metabolism; GMP biosynthesis; GMP from XMP (L-Gln route): step 1/1. In terms of biological role, catalyzes the synthesis of GMP from XMP. The polypeptide is GMP synthase [glutamine-hydrolyzing] (Coxiella burnetii (strain RSA 493 / Nine Mile phase I)).